The following is a 445-amino-acid chain: Gamma-glutamyl phosphate reductase (445 aa).

Belongs to the gamma-glutamyl phosphate reductase family.

The protein localises to the cytoplasm. The enzyme catalyses L-glutamate 5-semialdehyde + phosphate + NADP(+) = L-glutamyl 5-phosphate + NADPH + H(+). The protein operates within amino-acid biosynthesis; L-proline biosynthesis; L-glutamate 5-semialdehyde from L-glutamate: step 2/2. Catalyzes the NADPH-dependent reduction of L-glutamate 5-phosphate into L-glutamate 5-semialdehyde and phosphate. The product spontaneously undergoes cyclization to form 1-pyrroline-5-carboxylate. This Synechococcus sp. (strain RCC307) protein is Gamma-glutamyl phosphate reductase.